We begin with the raw amino-acid sequence, 305 residues long: uncharacterized protein (305 aa).

The interval 208–236 (SYAQSPAVKKKKWRHSGGKKNNPRENHID) is disordered. The span at 215–225 (VKKKKWRHSGG) shows a compositional bias: basic residues.

This is an uncharacterized protein from Bacillus subtilis (strain 168).